Reading from the N-terminus, the 1090-residue chain is DNA damage-binding protein 1 (1090 aa).

It belongs to the DDB1 family. As to quaternary structure, component of the UV-DDB complex, which is composed of DDB1 and DDB2. As to expression, expressed in proliferating tissues. Highly expressed in shoot apical meristem (SAM). Expressed in roots, young leaves, flag leaves, and panicles. Not detected in mature leaves.

Its subcellular location is the nucleus. In terms of biological role, required for DNA repair. Binds to DDB2 to form the UV-damaged DNA-binding protein complex (the UV-DDB complex). The UV-DDB complex may recognize UV-induced DNA damage and recruit proteins of the nucleotide excision repair pathway (the NER pathway) to initiate DNA repair. May function as the substrate recognition module for a DCX (DDB1-CUL4-X-box) E3 ubiquitin-protein ligase complex. This is DNA damage-binding protein 1 from Oryza sativa subsp. japonica (Rice).